We begin with the raw amino-acid sequence, 305 residues long: GTP cyclohydrolase FolE2 (305 aa).

It belongs to the GTP cyclohydrolase IV family.

The enzyme catalyses GTP + H2O = 7,8-dihydroneopterin 3'-triphosphate + formate + H(+). It functions in the pathway cofactor biosynthesis; 7,8-dihydroneopterin triphosphate biosynthesis; 7,8-dihydroneopterin triphosphate from GTP: step 1/1. Functionally, converts GTP to 7,8-dihydroneopterin triphosphate. The chain is GTP cyclohydrolase FolE2 from Xanthomonas axonopodis pv. citri (strain 306).